The primary structure comprises 78 residues: Structural DNA-binding protein p10 (78 aa).

The segment covering Met1–Ser24 has biased composition (low complexity). The tract at residues Met1–Gly41 is disordered.

It belongs to the asfivirus P10 family.

The protein resides in the virion. Functionally, may play a role in genome packaging through direct interaction with viral DNA. Binds to ssDNA and dsDNA with the same apparent affinity in vitro. This African swine fever virus (isolate Tick/South Africa/Pretoriuskop Pr4/1996) (ASFV) protein is Structural DNA-binding protein p10.